A 355-amino-acid polypeptide reads, in one-letter code: Protein MxiC (355 aa).

It localises to the secreted. Its subcellular location is the host cell. In terms of biological role, necessary for the secretion of IPA invasins. The sequence is that of Protein MxiC (mxiC) from Shigella flexneri.